The chain runs to 379 residues: MASHPTLKTTFAARSEATTHPLTSYLLRLMDLKASNLCLSADVPTARELLYLADKIGPSIVVLKTHYDMVSGWDFHPDTGTGAKLASLARKHGFLIFEDRKFGDIGHTVELQYTSGSARIIDWAHIVNVNMVPGKASVASLAQGARRWLERYPCEVKTSVTVGTPTMDQFDDAEDAKDDEPATVNDNGSNMMEKPIYAGRNGDGRKGSIVSITTVTQQYESAASPRLGKTIAEGDESLFPGIEEAPLNRGLLILAQMSSEGNFMTGEYTQACVEAAREHKDFVMGFISQEALNTQADDDFIHMTPGCQLPPEDEDQQTNGKVGGDGQGQQYNTAHKIIGIAGSDIAIVGRGILKASDPVEEAERYRSAAWKAYTERLLR.

Substrate is bound by residues D42, 64 to 66, and 99 to 108; these read KTH and DRKFGDIGHT. K101 acts as the Proton donor in catalysis. Residues 165 to 198 form a disordered region; sequence PTMDQFDDAEDAKDDEPATVNDNGSNMMEKPIYA. The span at 169–178 shows a compositional bias: acidic residues; it reads QFDDAEDAKD. Y331 and R350 together coordinate substrate.

The protein belongs to the OMP decarboxylase family.

It catalyses the reaction orotidine 5'-phosphate + H(+) = UMP + CO2. Its pathway is pyrimidine metabolism; UMP biosynthesis via de novo pathway; UMP from orotate: step 2/2. The protein is Orotidine 5'-phosphate decarboxylase (pyr4) of Hypocrea atroviridis (Trichoderma atroviride).